The primary structure comprises 203 residues: NAD(P)H-quinone oxidoreductase subunit I (203 aa).

4Fe-4S ferredoxin-type domains lie at 55–84 and 95–124; these read GRIH…VDWE and KHYS…MTEE. The [4Fe-4S] cluster site is built by Cys64, Cys67, Cys70, Cys74, Cys104, Cys107, Cys110, and Cys114.

This sequence belongs to the complex I 23 kDa subunit family. NDH-1 is composed of at least 11 different subunits. The cofactor is [4Fe-4S] cluster.

It localises to the cellular thylakoid membrane. It catalyses the reaction a plastoquinone + NADH + (n+1) H(+)(in) = a plastoquinol + NAD(+) + n H(+)(out). The catalysed reaction is a plastoquinone + NADPH + (n+1) H(+)(in) = a plastoquinol + NADP(+) + n H(+)(out). NDH-1 shuttles electrons from an unknown electron donor, via FMN and iron-sulfur (Fe-S) centers, to quinones in the respiratory and/or the photosynthetic chain. The immediate electron acceptor for the enzyme in this species is believed to be plastoquinone. Couples the redox reaction to proton translocation, and thus conserves the redox energy in a proton gradient. This chain is NAD(P)H-quinone oxidoreductase subunit I (ndhI), found in Picosynechococcus sp. (strain ATCC 27264 / PCC 7002 / PR-6) (Agmenellum quadruplicatum).